We begin with the raw amino-acid sequence, 257 residues long: Thiazole synthase (257 aa).

K96 (schiff-base intermediate with DXP) is an active-site residue. Residues G157, 184 to 185 (AG), and 206 to 207 (NT) contribute to the 1-deoxy-D-xylulose 5-phosphate site.

It belongs to the ThiG family. Homotetramer. Forms heterodimers with either ThiH or ThiS.

Its subcellular location is the cytoplasm. It catalyses the reaction [ThiS sulfur-carrier protein]-C-terminal-Gly-aminoethanethioate + 2-iminoacetate + 1-deoxy-D-xylulose 5-phosphate = [ThiS sulfur-carrier protein]-C-terminal Gly-Gly + 2-[(2R,5Z)-2-carboxy-4-methylthiazol-5(2H)-ylidene]ethyl phosphate + 2 H2O + H(+). The protein operates within cofactor biosynthesis; thiamine diphosphate biosynthesis. Catalyzes the rearrangement of 1-deoxy-D-xylulose 5-phosphate (DXP) to produce the thiazole phosphate moiety of thiamine. Sulfur is provided by the thiocarboxylate moiety of the carrier protein ThiS. In vitro, sulfur can be provided by H(2)S. The chain is Thiazole synthase from Rhizobium rhizogenes (strain K84 / ATCC BAA-868) (Agrobacterium radiobacter).